A 456-amino-acid polypeptide reads, in one-letter code: 3-isopropylmalate dehydratase large subunit (456 aa).

Residues Cys336, Cys396, and Cys399 each coordinate [4Fe-4S] cluster.

This sequence belongs to the aconitase/IPM isomerase family. LeuC type 1 subfamily. Heterodimer of LeuC and LeuD. [4Fe-4S] cluster is required as a cofactor.

It carries out the reaction (2R,3S)-3-isopropylmalate = (2S)-2-isopropylmalate. The protein operates within amino-acid biosynthesis; L-leucine biosynthesis; L-leucine from 3-methyl-2-oxobutanoate: step 2/4. Catalyzes the isomerization between 2-isopropylmalate and 3-isopropylmalate, via the formation of 2-isopropylmaleate. The polypeptide is 3-isopropylmalate dehydratase large subunit (Staphylococcus haemolyticus (strain JCSC1435)).